Consider the following 520-residue polypeptide: Probable kinase 098L (520 aa).

In terms of domain architecture, Protein kinase spans 82-393; it reads LTSVQSFGSK…NSPLLKKGFV (312 aa). Residues 88-96 and K111 each bind ATP; that span reads FGSKSKQGI. The Proton acceptor role is filled by D205. Residues 416 to 442 adopt a coiled-coil conformation; the sequence is QTAQLIETDKEILDNLIDDLELKIVRK.

This sequence belongs to the protein kinase superfamily.

Functionally, probable kinase. The sequence is that of Probable kinase 098L from Aedes vexans (Inland floodwater mosquito).